The following is an 80-amino-acid chain: Defensin-like protein 207 (80 aa).

A signal peptide spans methionine 1–alanine 29. 3 disulfide bridges follow: cysteine 38/cysteine 64, cysteine 50/cysteine 75, and cysteine 54/cysteine 77.

The protein belongs to the DEFL family.

The protein resides in the secreted. The polypeptide is Defensin-like protein 207 (Arabidopsis thaliana (Mouse-ear cress)).